A 338-amino-acid chain; its full sequence is Phenylalanine--tRNA ligase alpha subunit (338 aa).

Position 252 (E252) interacts with Mg(2+).

The protein belongs to the class-II aminoacyl-tRNA synthetase family. Phe-tRNA synthetase alpha subunit type 1 subfamily. In terms of assembly, tetramer of two alpha and two beta subunits. It depends on Mg(2+) as a cofactor.

It localises to the cytoplasm. The enzyme catalyses tRNA(Phe) + L-phenylalanine + ATP = L-phenylalanyl-tRNA(Phe) + AMP + diphosphate + H(+). The polypeptide is Phenylalanine--tRNA ligase alpha subunit (Pseudomonas fluorescens (strain ATCC BAA-477 / NRRL B-23932 / Pf-5)).